The primary structure comprises 321 residues: Corticotropin-releasing factor-binding protein (321 aa).

Positions 1 to 21 (MTPASRPDWCLILLFLAVLRG) are cleaved as a signal peptide. 5 disulfides stabilise this stretch: Cys-59-Cys-80, Cys-103-Cys-140, Cys-182-Cys-204, Cys-237-Cys-264, and Cys-277-Cys-317. An N-linked (GlcNAc...) asparagine glycan is attached at Asn-203.

Belongs to the CRF-binding protein family.

The protein localises to the secreted. Functionally, binds CRF and inactivates it. May prevent inappropriate pituitary-adrenal stimulation in pregnancy. The sequence is that of Corticotropin-releasing factor-binding protein (crhbp) from Xenopus laevis (African clawed frog).